The sequence spans 389 residues: Indole-3-acetate monooxygenase (389 aa).

The protein belongs to the HpaH/HsaA monooxygenase family.

It catalyses the reaction (indol-3-yl)acetate + NADH + O2 + H(+) = 2-hydroxy-(1H-indol-3-yl)acetate + NAD(+) + H2O. The enzyme catalyses indole + NADH + O2 + H(+) = indoxyl + NAD(+) + H2O. In terms of biological role, involved in the degradation of the plant hormone indole-3-acetic acid (IAA). Catalyzes the first step of the pathway, the conversion of IAA to 2-hydroxy-IAA (2-OH-IAA). Can also convert indole to indoxyl, which spontaneously dimerizes in the presence of oxygen to form the blue pigment indigo. The polypeptide is Indole-3-acetate monooxygenase (Acinetobacter baumannii (strain ATCC 19606 / DSM 30007 / JCM 6841 / CCUG 19606 / CIP 70.34 / NBRC 109757 / NCIMB 12457 / NCTC 12156 / 81)).